Reading from the N-terminus, the 270-residue chain is NAD(P)H-hydrate epimerase (270 aa).

The YjeF N-terminal domain occupies 25 to 234; it reads FQQLMDLMQN…DLLAPEEIYQ (210 aa). A (6S)-NADPHX-binding site is contributed by 73–77; that stretch reads DNGGQ. Residues asparagine 74 and aspartate 144 each coordinate K(+). (6S)-NADPHX-binding positions include 148–154 and glutamate 177; that span reads GVGLYGH. A K(+)-binding site is contributed by threonine 180.

This sequence belongs to the NnrE/AIBP family. K(+) serves as cofactor.

The enzyme catalyses (6R)-NADHX = (6S)-NADHX. It catalyses the reaction (6R)-NADPHX = (6S)-NADPHX. Functionally, catalyzes the epimerization of the S- and R-forms of NAD(P)HX, a damaged form of NAD(P)H that is a result of enzymatic or heat-dependent hydration. This is a prerequisite for the S-specific NAD(P)H-hydrate dehydratase to allow the repair of both epimers of NAD(P)HX. This chain is NAD(P)H-hydrate epimerase, found in Legionella pneumophila (strain Paris).